Reading from the N-terminus, the 270-residue chain is MRHHEWVPLDEIVRKAKMPEKDVLYRLKRLNKFGFVVRSTYGYAVSMGGYDALAINAFVKKGILKAIGNKLGVGKEGDVYTVLLSDGREAVLKFHKHGRTCFTRGKRYRGYLADKHHISWLYVSRLTAEREFEILNELFPIVKVPEPIEWNRHAIIMGKVVGEELKRLDLSEFMSKEEIKDLFWKIIEEVKKAYEIGYIHGDLSEFNILLDENGDFVIIDWPQAVPKYHPDAEFYLKRDIWNVIRYFKKYKIDKEDEKIDVDKIFEYITK.

Residues 65–270 enclose the Protein kinase domain; it reads KAIGNKLGVG…VDKIFEYITK (206 aa). Residues 72–77, Lys-93, and 158–164 each bind ATP; these read GVGKEG and GKVVGEE. Mg(2+) is bound at residue Glu-76. Catalysis depends on Asp-202, which acts as the Proton acceptor. ATP is bound by residues 206 to 207 and Asp-220; that span reads FN. 2 residues coordinate Mg(2+): Asn-207 and Asp-220.

The protein belongs to the protein kinase superfamily. RIO-type Ser/Thr kinase family. Monomer. Mg(2+) is required as a cofactor.

The catalysed reaction is L-seryl-[protein] + ATP = O-phospho-L-seryl-[protein] + ADP + H(+). It catalyses the reaction L-threonyl-[protein] + ATP = O-phospho-L-threonyl-[protein] + ADP + H(+). This chain is RIO-type serine/threonine-protein kinase Rio2 (rio2), found in Methanocaldococcus jannaschii (strain ATCC 43067 / DSM 2661 / JAL-1 / JCM 10045 / NBRC 100440) (Methanococcus jannaschii).